Consider the following 297-residue polypeptide: Bax inhibitor 1 (297 aa).

The Lumenal portion of the chain corresponds to 1–53 (MSGPPPPYEEQSSHLYGQPASSQDGNAFIPEDFKYSTVVISCEPIIRQRFMHK). A helical membrane pass occupies residues 54-74 (VYSLLSCQLLASLSFCYWASV). Residues 75–85 (STSLQNFIMSH) lie on the Cytoplasmic side of the membrane. Residues 86 to 106 (IALFYICMVVSLVSCIWLAVS) form a helical membrane-spanning segment. Residues 107–146 (PRPEDYEASVPEPLLTGSSEEPAQEQRRLPWYVLSSYKQK) lie on the Lumenal side of the membrane. The chain crosses the membrane as a helical span at residues 147–167 (LTLLSIFTLSEAYCLSLVTLA). Topologically, residues 168 to 171 (YDKD) are cytoplasmic. Residues 172–192 (TVLSALLITTIVVVGVSLTAL) form a helical membrane-spanning segment. Residues 193-208 (SERFENVLNSATSIYY) are Lumenal-facing. The helical transmembrane segment at 209–229 (WLNWGLWIMIGMGLTALLFGW) threads the bilayer. Over 230–239 (NTHSSKFNLL) the chain is Cytoplasmic. The chain crosses the membrane as a helical span at residues 240 to 260 (YGWLGAILFTAYLFIDTQLIF). Over 261-270 (RKVYPDEEVR) the chain is Lumenal. Residues 271–291 (CAMMLYLDIVNLFLSILRILA) traverse the membrane as a helical segment. At 292–297 (NSNDDN) the chain is on the cytoplasmic side.

This sequence belongs to the BI1 family. LFG subfamily.

It is found in the endoplasmic reticulum membrane. Its subcellular location is the vacuole membrane. The protein resides in the mitochondrion membrane. Functionally, links the unfolded protein response and programmed cell death and mediates mitochondrial-dependent apoptosis. Induces cell death and disruption of the mitochondrial transmembrane potential via the mitochondrial phosphate carrier MIR1. Dispensible for starvation-induced autophagy. The protein is Bax inhibitor 1 (BXI1) of Saccharomyces cerevisiae (strain ATCC 204508 / S288c) (Baker's yeast).